Reading from the N-terminus, the 547-residue chain is MFS-type transporter ungB (547 aa).

14 helical membrane-spanning segments follow: residues 14–34 (LLVT…ETVL), 50–70 (DVGW…MAWG), 80–100 (WVFL…GVSP), 111–131 (IAGL…SNTI), 138–158 (IYLG…PVIG), 169–189 (WCFF…VFCL), 210–230 (LLGS…LEWG), 238–258 (SWRV…FAVV), 279–299 (LGLI…VYYL), 316–336 (LAIL…GILV), 343–363 (TPFL…LSSL), 366–386 (ASGL…IGLG), 392–412 (VVPS…TLCF), and 475–495 (AVSE…LGSA). The disordered stretch occupies residues 503–547 (PGHKEATEKVEGEGQGQGQQQEQDQGQGWGEVGESHALAHPTADK). The span at 504 to 514 (GHKEATEKVEG) shows a compositional bias: basic and acidic residues.

It belongs to the major facilitator superfamily. TCR/Tet family.

The protein localises to the membrane. In terms of biological role, MFS-type transporter; part of the gene cluster that mediates the biosynthesis of the unguisins, gamma-aminobutyric acid (GABA)-containing fungal cyclic heptapeptides with the amino acid sequence cyclo-(D-Ala1-D-Val2-L-Phe3-D-Val4-D-Ala5-D-Trp6-GABA7) for unguisin A and cyclo-(D-Ala1-D-Val2-L-Leu3-D-Val4-D-Ala5-D-Trp6-GABA7) for unguisin B. May be involved in the secretion of unguisins. This is MFS-type transporter ungB from Aspergillus violaceofuscus (strain CBS 115571).